A 261-amino-acid chain; its full sequence is MARLVFSLNLPSSHGFNLSPRNLQSFFVTQTGAPRFRAVRCKPNPESSETKQEKLVIDNGETSSASKEVESSSSVADSSSSSSSGFPESPNKDINRRVAAVTVIAALSLFVSTRLDFGISLKDLTASALPYEEALSNGKPTVVEFYADWCEVCRELAPDVYKIEQQYKDKVNFVMLNVDNTKWEQELDEFGVEGIPHFAFLDREGNEEGNVVGRLPRQYLVENVNALAAGKQSIPYARAVGQYSSSESRKVHQVTDPLSHG.

The N-terminal 40 residues, 1-40 (MARLVFSLNLPSSHGFNLSPRNLQSFFVTQTGAPRFRAVR), are a transit peptide targeting the chloroplast. The tract at residues 39-91 (VRCKPNPESSETKQEKLVIDNGETSSASKEVESSSSVADSSSSSSSGFPESPN) is disordered. Over residues 63 to 84 (SSASKEVESSSSVADSSSSSSS) the composition is skewed to low complexity. The 129-residue stretch at 101-229 (VTVIAALSLF…LVENVNALAA (129 aa)) folds into the Thioredoxin domain. Catalysis depends on nucleophile residues Cys-150 and Cys-153. An intrachain disulfide couples Cys-150 to Cys-153.

This sequence belongs to the thioredoxin family. Interacts in vitro with LTO1.

It localises to the plastid. The protein localises to the chloroplast thylakoid membrane. Its function is as follows. Thiol-disulfide oxidoreductase that participates in various redox reactions in the chloroplast. Mediates the reduction of PSI-N in the thylakoid lumen. May interact and probably reduce other target proteins of the thylakoid membrane, such as FTSH2, FTSH8, LHCB5, atpA, atpB, atpE, petA and petC. Involved in the biogenesis of the plastid cytochrome b6f complex. Reducing equivalents are provided by stromal M-type thioredoxins and probably transduced through the thylakoid membrane by CCDA. Possesses low insulin disulfide bonds reducing activity. The sequence is that of Thioredoxin-like protein HCF164, chloroplastic from Arabidopsis thaliana (Mouse-ear cress).